Here is a 149-residue protein sequence, read N- to C-terminus: MSNNELLEIEPMYLQFPFELKKQMSCSLYLTNKTDNNVAFKVKTTNRNNYCVRPNYGLILPKSTCKVLVTMQAQKEVPSDMQSFEKFMIQSVLASPGVTAKEVTREMFSKESGHVVEETKLRVTYVCSTTTNITSSPRTRRGFIFQCFC.

At Met1 the chain carries N-acetylmethionine. N-acetylserine; in Vesicle-associated protein 3-1, N-terminally processed is present on Ser2. Positions 6-126 (LLEIEPMYLQ…EETKLRVTYV (121 aa)) constitute an MSP domain.

The protein belongs to the VAMP-associated protein (VAP) (TC 9.B.17) family.

Functionally, may play a role in vesicle trafficking. The chain is Vesicle-associated protein 3-1 (PVA31) from Arabidopsis thaliana (Mouse-ear cress).